The following is a 243-amino-acid chain: UPF0246 protein SUB1767 (243 aa).

The protein belongs to the UPF0246 family.

The polypeptide is UPF0246 protein SUB1767 (Streptococcus uberis (strain ATCC BAA-854 / 0140J)).